Here is a 424-residue protein sequence, read N- to C-terminus: Adenylosuccinate synthetase (424 aa).

Residues Gly12–Lys18 and Gly40–Thr42 each bind GTP. Asp13 acts as the Proton acceptor in catalysis. Residues Asp13 and Gly40 each contribute to the Mg(2+) site. IMP is bound by residues Asp13–Lys16, Asn38–His41, Thr130, Arg144, Asn220, Thr235, and Arg299. His41 serves as the catalytic Proton donor. Position 295–301 (Val295–Arg301) interacts with substrate. Residues Arg301, Lys327–Asp329, and Gly412–Gly414 each bind GTP.

This sequence belongs to the adenylosuccinate synthetase family. In terms of assembly, homodimer. The cofactor is Mg(2+).

It is found in the cytoplasm. It carries out the reaction IMP + L-aspartate + GTP = N(6)-(1,2-dicarboxyethyl)-AMP + GDP + phosphate + 2 H(+). It participates in purine metabolism; AMP biosynthesis via de novo pathway; AMP from IMP: step 1/2. Functionally, plays an important role in the de novo pathway and in the salvage pathway of purine nucleotide biosynthesis. Catalyzes the first committed step in the biosynthesis of AMP from IMP. In Aspergillus clavatus (strain ATCC 1007 / CBS 513.65 / DSM 816 / NCTC 3887 / NRRL 1 / QM 1276 / 107), this protein is Adenylosuccinate synthetase.